A 348-amino-acid chain; its full sequence is UDP-3-O-acylglucosamine N-acyltransferase (348 aa).

The active-site Proton acceptor is His241.

This sequence belongs to the transferase hexapeptide repeat family. LpxD subfamily. In terms of assembly, homotrimer.

It catalyses the reaction a UDP-3-O-[(3R)-3-hydroxyacyl]-alpha-D-glucosamine + a (3R)-hydroxyacyl-[ACP] = a UDP-2-N,3-O-bis[(3R)-3-hydroxyacyl]-alpha-D-glucosamine + holo-[ACP] + H(+). The protein operates within bacterial outer membrane biogenesis; LPS lipid A biosynthesis. Catalyzes the N-acylation of UDP-3-O-acylglucosamine using 3-hydroxyacyl-ACP as the acyl donor. Is involved in the biosynthesis of lipid A, a phosphorylated glycolipid that anchors the lipopolysaccharide to the outer membrane of the cell. The sequence is that of UDP-3-O-acylglucosamine N-acyltransferase from Neisseria meningitidis serogroup B (strain ATCC BAA-335 / MC58).